We begin with the raw amino-acid sequence, 237 residues long: Orotidine 5'-phosphate decarboxylase (237 aa).

Substrate contacts are provided by residues Asp10, Lys33, 60 to 69 (DLKLHDIPNT), Thr124, Arg186, Gln195, Gly215, and Arg216. The active-site Proton donor is Lys62.

This sequence belongs to the OMP decarboxylase family. Type 1 subfamily. Homodimer.

It carries out the reaction orotidine 5'-phosphate + H(+) = UMP + CO2. It functions in the pathway pyrimidine metabolism; UMP biosynthesis via de novo pathway; UMP from orotate: step 2/2. Its function is as follows. Catalyzes the decarboxylation of orotidine 5'-monophosphate (OMP) to uridine 5'-monophosphate (UMP). This Lactiplantibacillus plantarum (strain ATCC BAA-793 / NCIMB 8826 / WCFS1) (Lactobacillus plantarum) protein is Orotidine 5'-phosphate decarboxylase.